The chain runs to 67 residues: MGNIKQAFIKRTARELFDRYPDKFTRDFEHNKRMVQELTNVTSKTIRNRIAGYITRLVRMKEEGKIL.

Belongs to the eukaryotic ribosomal protein eS17 family.

The protein is Small ribosomal subunit protein eS17 of Thermococcus gammatolerans (strain DSM 15229 / JCM 11827 / EJ3).